The chain runs to 266 residues: Hydroxyethylthiazole kinase (266 aa).

Met41 lines the substrate pocket. Residues Arg117 and Ser163 each contribute to the ATP site. Ala190 is a binding site for substrate.

This sequence belongs to the Thz kinase family. Mg(2+) is required as a cofactor.

The enzyme catalyses 5-(2-hydroxyethyl)-4-methylthiazole + ATP = 4-methyl-5-(2-phosphooxyethyl)-thiazole + ADP + H(+). The protein operates within cofactor biosynthesis; thiamine diphosphate biosynthesis; 4-methyl-5-(2-phosphoethyl)-thiazole from 5-(2-hydroxyethyl)-4-methylthiazole: step 1/1. Its function is as follows. Catalyzes the phosphorylation of the hydroxyl group of 4-methyl-5-beta-hydroxyethylthiazole (THZ). This chain is Hydroxyethylthiazole kinase, found in Histophilus somni (strain 129Pt) (Haemophilus somnus).